Here is a 498-residue protein sequence, read N- to C-terminus: Probable malate:quinone oxidoreductase 2 (498 aa).

Belongs to the MQO family. Requires FAD as cofactor.

The catalysed reaction is (S)-malate + a quinone = a quinol + oxaloacetate. It participates in carbohydrate metabolism; tricarboxylic acid cycle; oxaloacetate from (S)-malate (quinone route): step 1/1. The sequence is that of Probable malate:quinone oxidoreductase 2 from Staphylococcus epidermidis (strain ATCC 35984 / DSM 28319 / BCRC 17069 / CCUG 31568 / BM 3577 / RP62A).